The primary structure comprises 168 residues: Ribosome maturation factor RimM (168 aa).

The region spanning 96–168 is the PRC barrel domain; the sequence is VDEYYWGDLI…TIRVDWQKDW (73 aa).

This sequence belongs to the RimM family. In terms of assembly, binds ribosomal protein uS19.

It localises to the cytoplasm. Its function is as follows. An accessory protein needed during the final step in the assembly of 30S ribosomal subunit, possibly for assembly of the head region. Essential for efficient processing of 16S rRNA. May be needed both before and after RbfA during the maturation of 16S rRNA. It has affinity for free ribosomal 30S subunits but not for 70S ribosomes. In Aromatoleum aromaticum (strain DSM 19018 / LMG 30748 / EbN1) (Azoarcus sp. (strain EbN1)), this protein is Ribosome maturation factor RimM.